The primary structure comprises 137 residues: Transcription antitermination protein NusB (137 aa).

This sequence belongs to the NusB family.

Functionally, involved in transcription antitermination. Required for transcription of ribosomal RNA (rRNA) genes. Binds specifically to the boxA antiterminator sequence of the ribosomal RNA (rrn) operons. The chain is Transcription antitermination protein NusB from Aeromonas salmonicida (strain A449).